We begin with the raw amino-acid sequence, 409 residues long: LL-diaminopimelate aminotransferase (409 aa).

Residues tyrosine 15 and glycine 42 each coordinate substrate. Residues tyrosine 72, 108–109 (AK), tyrosine 132, asparagine 186, tyrosine 217, and 245–247 (SFS) each bind pyridoxal 5'-phosphate. Residues lysine 109, tyrosine 132, and asparagine 186 each contribute to the substrate site. The residue at position 248 (lysine 248) is an N6-(pyridoxal phosphate)lysine. Residues arginine 256 and asparagine 291 each coordinate pyridoxal 5'-phosphate. Asparagine 291 and arginine 386 together coordinate substrate.

It belongs to the class-I pyridoxal-phosphate-dependent aminotransferase family. LL-diaminopimelate aminotransferase subfamily. Homodimer. Pyridoxal 5'-phosphate is required as a cofactor.

The enzyme catalyses (2S,6S)-2,6-diaminopimelate + 2-oxoglutarate = (S)-2,3,4,5-tetrahydrodipicolinate + L-glutamate + H2O + H(+). It participates in amino-acid biosynthesis; L-lysine biosynthesis via DAP pathway; LL-2,6-diaminopimelate from (S)-tetrahydrodipicolinate (aminotransferase route): step 1/1. Functionally, involved in the synthesis of meso-diaminopimelate (m-DAP or DL-DAP), required for both lysine and peptidoglycan biosynthesis. Catalyzes the direct conversion of tetrahydrodipicolinate to LL-diaminopimelate. In Desulforapulum autotrophicum (strain ATCC 43914 / DSM 3382 / VKM B-1955 / HRM2) (Desulfobacterium autotrophicum), this protein is LL-diaminopimelate aminotransferase.